The chain runs to 86 residues: uncharacterized protein (86 aa).

2 helical membrane passes run 20–38 (IQFW…SVYL) and 47–63 (FSTF…TKGV). Residues 67–86 (LSQRREQGKEQGREQGREQE) form a disordered region. Basic and acidic residues predominate over residues 69 to 86 (QRREQGKEQGREQGREQE).

The protein resides in the cell membrane. This is an uncharacterized protein from Haemophilus influenzae (strain ATCC 51907 / DSM 11121 / KW20 / Rd).